A 118-amino-acid chain; its full sequence is Large ribosomal subunit protein bL20 (118 aa).

This sequence belongs to the bacterial ribosomal protein bL20 family.

In terms of biological role, binds directly to 23S ribosomal RNA and is necessary for the in vitro assembly process of the 50S ribosomal subunit. It is not involved in the protein synthesizing functions of that subunit. The protein is Large ribosomal subunit protein bL20 of Protochlamydia amoebophila (strain UWE25).